The following is a 475-amino-acid chain: WASH complex subunit 1 (475 aa).

Residues 1-54 (MTAVKTQHSLAGQVYAVPLIQPDLRREEAIQQVADALQYLQNISGDIFSRISQR) form a required for WASH complex assembly region. The interval 1–167 (MTAVKTQHSL…EGLGGLPSNI (167 aa)) is WHD1. A Glycyl lysine isopeptide (Lys-Gly) (interchain with G-Cter in ubiquitin) cross-link involves residue K219. Residues 296–475 (EDGALLAPPP…GDEDEDDWES (180 aa)) are disordered. Pro residues predominate over residues 302–318 (APPPPPPPPPPPPPPAP). The segment at 357–475 (QGAPKEVVDP…GDEDEDDWES (119 aa)) is VCA. The 23-residue stretch at 369–391 (GRATLLESIRQAGGIGKAKLRSV) folds into the WH2 domain. Basic and acidic residues predominate over residues 390 to 406 (SVKERKLEKKKQKEQEQ). A compositionally biased stretch (gly residues) spans 432–446 (SGKGPGTGTSEGPGG). Acidic residues predominate over residues 466 to 475 (GDEDEDDWES).

The protein belongs to the WASH1 family. In terms of assembly, component of the WASH core complex also described as WASH regulatory complex SHRC composed of WASHC1, WASHC2, WASHC3, WASHC4 and WASHC5. The WASH core complex associates with the F-actin-capping protein dimer (formed by CAPZA1, CAPZA2 or CAPZA3 and CAPZB) in a transient or substoichiometric manner which was initially described as WASH complex. Interacts (via WHD1 region) with WASHC2; the interaction is direct. Interacts with BECN1; WASHC1 and AMBRA1 can competitively interact with BECN1. Interacts with BLOC1S2; may associate with the BLOC-1 complex. Interacts with tubulin gamma chain (TUBG1 or TUBG2). Interacts with TBC1D23. In terms of processing, ubiquitinated at Lys-219 via 'Lys-63'-linked ubiquitin chains by the TRIM27:MAGEL2 E3 ubiquitin ligase complex, leading to promote endosomal F-actin assembly.

The protein localises to the early endosome membrane. The protein resides in the recycling endosome membrane. Its function is as follows. Acts as a component of the WASH core complex that functions as a nucleation-promoting factor (NPF) at the surface of endosomes, where it recruits and activates the Arp2/3 complex to induce actin polymerization, playing a key role in the fission of tubules that serve as transport intermediates during endosome sorting. Regulates the trafficking of endosomal alpha5beta1 integrin to the plasma membrane and involved in invasive cell migration. In T-cells involved in endosome-to-membrane recycling of receptors including T-cell receptor (TCR), CD28 and ITGAL; proposed to be implicated in T-cell proliferation and effector function. In dendritic cells involved in endosome-to-membrane recycling of major histocompatibility complex (MHC) class II probably involving retromer and subsequently allowing antigen sampling, loading and presentation during T-cell activation. Involved in cytokinesis and following polar body extrusion during oocyte meiotic maturation. Involved in Arp2/3 complex-dependent actin assembly driving Salmonella typhimurium invasion independent of ruffling. Involved in the exocytosis of MMP14 leading to matrix remodeling during invasive migration and implicating late endosome-to-plasma membrane tubular connections and cooperation with the exocyst complex. Involved in negative regulation of autophagy independently from its role in endosomal sorting by inhibiting BECN1 ubiquitination to inactivate PIK3C3/Vps34 activity. The polypeptide is WASH complex subunit 1 (Rattus norvegicus (Rat)).